The chain runs to 155 residues: 3-hydroxyacyl-[acyl-carrier-protein] dehydratase FabZ (155 aa).

H61 is an active-site residue.

It belongs to the thioester dehydratase family. FabZ subfamily.

The protein localises to the cytoplasm. It carries out the reaction a (3R)-hydroxyacyl-[ACP] = a (2E)-enoyl-[ACP] + H2O. In terms of biological role, involved in unsaturated fatty acids biosynthesis. Catalyzes the dehydration of short chain beta-hydroxyacyl-ACPs and long chain saturated and unsaturated beta-hydroxyacyl-ACPs. This Synechococcus sp. (strain ATCC 27144 / PCC 6301 / SAUG 1402/1) (Anacystis nidulans) protein is 3-hydroxyacyl-[acyl-carrier-protein] dehydratase FabZ.